Reading from the N-terminus, the 119-residue chain is Putative membrane protein insertion efficiency factor (119 aa).

A disordered region spans residues 82-119 (NALRGEKGGESAADVPSGGSVSEPPGPAAETSPNAQGA).

Belongs to the UPF0161 family.

It localises to the cell membrane. Could be involved in insertion of integral membrane proteins into the membrane. This Streptomyces griseus subsp. griseus (strain JCM 4626 / CBS 651.72 / NBRC 13350 / KCC S-0626 / ISP 5235) protein is Putative membrane protein insertion efficiency factor.